The primary structure comprises 544 residues: Chaperonin GroEL (544 aa).

ATP-binding positions include 30–33 (TLGP), Lys51, 87–91 (DGTTT), Gly415, 481–483 (DAL), and Asp497.

Belongs to the chaperonin (HSP60) family. As to quaternary structure, forms a cylinder of 14 subunits composed of two heptameric rings stacked back-to-back. Interacts with the co-chaperonin GroES.

The protein localises to the cytoplasm. The catalysed reaction is ATP + H2O + a folded polypeptide = ADP + phosphate + an unfolded polypeptide.. Together with its co-chaperonin GroES, plays an essential role in assisting protein folding. The GroEL-GroES system forms a nano-cage that allows encapsulation of the non-native substrate proteins and provides a physical environment optimized to promote and accelerate protein folding. In Chlamydia felis (strain Fe/C-56) (Chlamydophila felis), this protein is Chaperonin GroEL.